The sequence spans 437 residues: Glutamyl-tRNA reductase (437 aa).

Substrate-binding positions include 49-52 (TCNR), S109, 114-116 (ETQ), and Q120. C50 acts as the Nucleophile in catalysis. Residue 189 to 194 (GAGEMS) coordinates NADP(+).

It belongs to the glutamyl-tRNA reductase family. In terms of assembly, homodimer.

The enzyme catalyses (S)-4-amino-5-oxopentanoate + tRNA(Glu) + NADP(+) = L-glutamyl-tRNA(Glu) + NADPH + H(+). The protein operates within porphyrin-containing compound metabolism; protoporphyrin-IX biosynthesis; 5-aminolevulinate from L-glutamyl-tRNA(Glu): step 1/2. Catalyzes the NADPH-dependent reduction of glutamyl-tRNA(Glu) to glutamate 1-semialdehyde (GSA). This Listeria welshimeri serovar 6b (strain ATCC 35897 / DSM 20650 / CCUG 15529 / CIP 8149 / NCTC 11857 / SLCC 5334 / V8) protein is Glutamyl-tRNA reductase.